A 136-amino-acid polypeptide reads, in one-letter code: Large ribosomal subunit protein bL17 (136 aa).

It belongs to the bacterial ribosomal protein bL17 family. Part of the 50S ribosomal subunit. Contacts protein L32.

In Rickettsia canadensis (strain McKiel), this protein is Large ribosomal subunit protein bL17.